Reading from the N-terminus, the 152-residue chain is Cell division protein SepF (152 aa).

The tract at residues 25–54 (EEREPVQEEKGTKDKAAFQERPQTGKQNVV) is disordered. The segment covering 28-42 (EPVQEEKGTKDKAAF) has biased composition (basic and acidic residues).

It belongs to the SepF family. Homodimer. Interacts with FtsZ.

The protein localises to the cytoplasm. Functionally, cell division protein that is part of the divisome complex and is recruited early to the Z-ring. Probably stimulates Z-ring formation, perhaps through the cross-linking of FtsZ protofilaments. Its function overlaps with FtsA. This chain is Cell division protein SepF, found in Bacillus pumilus (strain SAFR-032).